The following is a 306-amino-acid chain: MANTWWELQISCESALEDSVSWRLEDFGCRGTASESKGDSCLVKGYLPIFQAQLLDLAALGLWLQQDALCIGLSSPTLTWQLIDEEDWASSWKQYWHPQEIGDRFLINPAWLPSPENSDRLIIRLDPGVAFGTGNHATTQLCLESLEMRLSEVPKSFISKGGNQEPVIIADIGCGSGILSIGAVLLGAQKVYAVDTDPLAVQSTFSNRALNEVNPERLVPAEGSVDILKKLIERPVDGIVCNILADVIIQLVPEISEISKPSTWAIFSGILVEQSTSVAEALEKHGWVVATMWKRKEWCCLNVRRT.

S-adenosyl-L-methionine contacts are provided by threonine 139, glycine 173, aspartate 195, and asparagine 242.

Belongs to the methyltransferase superfamily. PrmA family.

Its subcellular location is the cytoplasm. The enzyme catalyses L-lysyl-[protein] + 3 S-adenosyl-L-methionine = N(6),N(6),N(6)-trimethyl-L-lysyl-[protein] + 3 S-adenosyl-L-homocysteine + 3 H(+). Functionally, methylates ribosomal protein L11. This is Ribosomal protein L11 methyltransferase from Nostoc sp. (strain PCC 7120 / SAG 25.82 / UTEX 2576).